A 210-amino-acid polypeptide reads, in one-letter code: NAD(P)H-quinone oxidoreductase subunit I (210 aa).

2 4Fe-4S ferredoxin-type domains span residues glycine 54–alanine 83 and tyrosine 94–aspartate 123. [4Fe-4S] cluster-binding residues include cysteine 63, cysteine 66, cysteine 69, cysteine 73, cysteine 103, cysteine 106, cysteine 109, and cysteine 113.

The protein belongs to the complex I 23 kDa subunit family. As to quaternary structure, NDH-1 is composed of at least 11 different subunits. Requires [4Fe-4S] cluster as cofactor.

It localises to the cellular thylakoid membrane. It catalyses the reaction a plastoquinone + NADH + (n+1) H(+)(in) = a plastoquinol + NAD(+) + n H(+)(out). The catalysed reaction is a plastoquinone + NADPH + (n+1) H(+)(in) = a plastoquinol + NADP(+) + n H(+)(out). NDH-1 shuttles electrons from an unknown electron donor, via FMN and iron-sulfur (Fe-S) centers, to quinones in the respiratory and/or the photosynthetic chain. The immediate electron acceptor for the enzyme in this species is believed to be plastoquinone. Couples the redox reaction to proton translocation, and thus conserves the redox energy in a proton gradient. The sequence is that of NAD(P)H-quinone oxidoreductase subunit I from Synechococcus sp. (strain JA-2-3B'a(2-13)) (Cyanobacteria bacterium Yellowstone B-Prime).